The following is a 453-amino-acid chain: Phosphoglucosamine mutase (453 aa).

Serine 102 acts as the Phosphoserine intermediate in catalysis. Mg(2+) is bound by residues serine 102, aspartate 243, aspartate 245, and aspartate 247. The residue at position 102 (serine 102) is a Phosphoserine.

The protein belongs to the phosphohexose mutase family. It depends on Mg(2+) as a cofactor. In terms of processing, activated by phosphorylation.

It carries out the reaction alpha-D-glucosamine 1-phosphate = D-glucosamine 6-phosphate. Functionally, catalyzes the conversion of glucosamine-6-phosphate to glucosamine-1-phosphate. This is Phosphoglucosamine mutase from Bartonella tribocorum (strain CIP 105476 / IBS 506).